Reading from the N-terminus, the 123-residue chain is Putative iron-sulfur cluster insertion protein ErpA (123 aa).

Residues C51, C115, and C117 each coordinate iron-sulfur cluster.

This sequence belongs to the HesB/IscA family. In terms of assembly, homodimer. Requires iron-sulfur cluster as cofactor.

Functionally, required for insertion of 4Fe-4S clusters. In Bordetella avium (strain 197N), this protein is Putative iron-sulfur cluster insertion protein ErpA.